Consider the following 185-residue polypeptide: Ribosome-recycling factor (185 aa).

This sequence belongs to the RRF family.

It localises to the cytoplasm. Responsible for the release of ribosomes from messenger RNA at the termination of protein biosynthesis. May increase the efficiency of translation by recycling ribosomes from one round of translation to another. In Mycolicibacterium vanbaalenii (strain DSM 7251 / JCM 13017 / BCRC 16820 / KCTC 9966 / NRRL B-24157 / PYR-1) (Mycobacterium vanbaalenii), this protein is Ribosome-recycling factor.